The primary structure comprises 172 residues: Large ribosomal subunit protein bL17m (172 aa).

The transit peptide at 1–8 (MRLSFAAA) directs the protein to the mitochondrion.

This sequence belongs to the bacterial ribosomal protein bL17 family. Component of the mitochondrial ribosome large subunit (39S) which comprises a 16S rRNA and about 50 distinct proteins.

The protein localises to the mitochondrion. The sequence is that of Large ribosomal subunit protein bL17m (MRPL17) from Bos taurus (Bovine).